The primary structure comprises 476 residues: Probable rhodanese domain-containing dual specificity protein phosphatase (476 aa).

A Rhodanese domain is found at 32–190 (IGSSKIIIDL…FQKDYSFMCN (159 aa)). Residues 208 to 350 (YPSEIIKDFL…LKDYQQHLTL (143 aa)) form the Tyrosine-protein phosphatase domain. Cys-294 acts as the Phosphocysteine intermediate in catalysis. Residues 425–436 (KTTTSSTTINNK) show a composition bias toward low complexity. The disordered stretch occupies residues 425–476 (KTTTSSTTINNKGQQQDKAQEEKDSIFSYADKQEKMTHPTLHSPIELPQSSL). Positions 442 to 461 (KAQEEKDSIFSYADKQEKMT) are enriched in basic and acidic residues.

Belongs to the protein-tyrosine phosphatase family. Non-receptor class dual specificity subfamily.

The enzyme catalyses O-phospho-L-tyrosyl-[protein] + H2O = L-tyrosyl-[protein] + phosphate. It catalyses the reaction O-phospho-L-seryl-[protein] + H2O = L-seryl-[protein] + phosphate. The catalysed reaction is O-phospho-L-threonyl-[protein] + H2O = L-threonyl-[protein] + phosphate. Its function is as follows. Has a dual specificity toward Ser/Thr and Tyr-containing proteins. This is Probable rhodanese domain-containing dual specificity protein phosphatase from Dictyostelium discoideum (Social amoeba).